The sequence spans 328 residues: Phosphate acyltransferase (328 aa).

Belongs to the PlsX family. Homodimer. Probably interacts with PlsY.

It localises to the cytoplasm. The enzyme catalyses a fatty acyl-[ACP] + phosphate = an acyl phosphate + holo-[ACP]. It functions in the pathway lipid metabolism; phospholipid metabolism. In terms of biological role, catalyzes the reversible formation of acyl-phosphate (acyl-PO(4)) from acyl-[acyl-carrier-protein] (acyl-ACP). This enzyme utilizes acyl-ACP as fatty acyl donor, but not acyl-CoA. The chain is Phosphate acyltransferase from Geobacillus thermodenitrificans (strain NG80-2).